The chain runs to 684 residues: Pescadillo homolog (684 aa).

Residues 284–352 (DAAAAEASSN…DSDEEADDEA (69 aa)) form a disordered region. Residues 285–294 (AAAAEASSNA) are compositionally biased toward low complexity. Positions 296–310 (TRKDGKKLSTRDVKR) are enriched in basic and acidic residues. Positions 342 to 352 (QDSDEEADDEA) are enriched in acidic residues. The 100-residue stretch at 387–486 (PLPMLFSRYV…QILPTDPYRP (100 aa)) folds into the BRCT domain. Disordered stretches follow at residues 508–580 (GYVP…ALLA) and 612–684 (AASL…NKKP). A compositionally biased stretch (acidic residues) spans 528–543 (ADEDEDEDEDEDEDED). Residues 544 to 570 (KAGSGRGDDKNVAAREQDAVEKHDKTP) show a composition bias toward basic and acidic residues. Over residues 612–624 (AASLKSHKKKKRT) the composition is skewed to basic residues. The span at 663-675 (KKKEEKMRLEAKK) shows a compositional bias: basic and acidic residues.

It belongs to the pescadillo family. In terms of assembly, component of the NOP7 complex, composed of ERB1, NOP7 and YTM1. The complex is held together by ERB1, which interacts with NOP7 via its N-terminal domain and with YTM1 via a high-affinity interaction between the seven-bladed beta-propeller domains of the 2 proteins. The NOP7 complex associates with the 66S pre-ribosome.

Its subcellular location is the nucleus. It localises to the nucleolus. The protein resides in the nucleoplasm. Its function is as follows. Component of the NOP7 complex, which is required for maturation of the 25S and 5.8S ribosomal RNAs and formation of the 60S ribosome. This is Pescadillo homolog from Malassezia globosa (strain ATCC MYA-4612 / CBS 7966) (Dandruff-associated fungus).